A 400-amino-acid polypeptide reads, in one-letter code: Nicotinate phosphoribosyltransferase (400 aa).

His220 carries the phosphohistidine; by autocatalysis modification.

This sequence belongs to the NAPRTase family. Post-translationally, transiently phosphorylated on a His residue during the reaction cycle. Phosphorylation strongly increases the affinity for substrates and increases the rate of nicotinate D-ribonucleotide production. Dephosphorylation regenerates the low-affinity form of the enzyme, leading to product release.

The enzyme catalyses nicotinate + 5-phospho-alpha-D-ribose 1-diphosphate + ATP + H2O = nicotinate beta-D-ribonucleotide + ADP + phosphate + diphosphate. It functions in the pathway cofactor biosynthesis; NAD(+) biosynthesis; nicotinate D-ribonucleotide from nicotinate: step 1/1. Its function is as follows. Catalyzes the synthesis of beta-nicotinate D-ribonucleotide from nicotinate and 5-phospho-D-ribose 1-phosphate at the expense of ATP. The sequence is that of Nicotinate phosphoribosyltransferase from Escherichia coli O127:H6 (strain E2348/69 / EPEC).